A 360-amino-acid chain; its full sequence is Tryptophan--tRNA ligase, mitochondrial (360 aa).

ATP is bound by residues Q38 and 44 to 47 (HLGN). Residues 39–47 (PTGIPHLGN) carry the 'HIGH' region motif. An L-tryptophan-binding site is contributed by D168. Residues 180-182 (GED) and 229-233 (KMSKS) contribute to the ATP site. The segment covering 220–230 (IRSLREPEKKM) has biased composition (basic and acidic residues). Residues 220-241 (IRSLREPEKKMSKSSGGPRSRI) are disordered. Positions 229 to 233 (KMSKS) match the 'KMSKS' region motif.

It belongs to the class-I aminoacyl-tRNA synthetase family.

It is found in the mitochondrion matrix. The catalysed reaction is tRNA(Trp) + L-tryptophan + ATP = L-tryptophyl-tRNA(Trp) + AMP + diphosphate + H(+). Its function is as follows. Catalyzes the attachment of tryptophan to tRNA(Trp). In Caenorhabditis elegans, this protein is Tryptophan--tRNA ligase, mitochondrial.